A 90-amino-acid polypeptide reads, in one-letter code: Large ribosomal subunit protein bL27 (90 aa).

Positions 1-22 (MAHKKAGGSTRNGRDSNPKMLG) are disordered.

This sequence belongs to the bacterial ribosomal protein bL27 family.

This is Large ribosomal subunit protein bL27 from Coxiella burnetii (strain CbuK_Q154) (Coxiella burnetii (strain Q154)).